The primary structure comprises 533 residues: tRNA(Ile)-lysidine synthase (533 aa).

27–32 (SGGSDS) serves as a coordination point for ATP.

It belongs to the tRNA(Ile)-lysidine synthase family.

It localises to the cytoplasm. It carries out the reaction cytidine(34) in tRNA(Ile2) + L-lysine + ATP = lysidine(34) in tRNA(Ile2) + AMP + diphosphate + H(+). Its function is as follows. Ligates lysine onto the cytidine present at position 34 of the AUA codon-specific tRNA(Ile) that contains the anticodon CAU, in an ATP-dependent manner. Cytidine is converted to lysidine, thus changing the amino acid specificity of the tRNA from methionine to isoleucine. The chain is tRNA(Ile)-lysidine synthase from Rickettsia peacockii (strain Rustic).